A 252-amino-acid chain; its full sequence is MLLAVDIGNTSTALGLFSGEELIAHFRIHTDRMRMESEYRVILKNLFALEDLPPPKAALLASVVPPVEREMKRAIERLFGVEARVVEAADTGLEVLIDNPREAGADRLVNAVGALAYPSPTGRYIVVDFGTATTFDLVEAPNRYLGGAIAIGPQTAADALAQRTAKLPRIDLTPPKAAVGKNTLEALRSGLVLGYAALVEGMVRRFKEEAGEALVIATGGFAETLRPLCPCFDVVDEDLTLKGLLRIHLERG.

6-13 (DIGNTSTA) lines the ATP pocket. A substrate-binding site is contributed by 104–107 (GADR). The active-site Proton acceptor is Asp106. A K(+)-binding site is contributed by Asp128. Residue Thr131 participates in ATP binding. Position 183 (Thr183) interacts with substrate.

Belongs to the type III pantothenate kinase family. In terms of assembly, homodimer. NH4(+) serves as cofactor. The cofactor is K(+).

Its subcellular location is the cytoplasm. The enzyme catalyses (R)-pantothenate + ATP = (R)-4'-phosphopantothenate + ADP + H(+). It functions in the pathway cofactor biosynthesis; coenzyme A biosynthesis; CoA from (R)-pantothenate: step 1/5. In terms of biological role, catalyzes the phosphorylation of pantothenate (Pan), the first step in CoA biosynthesis. The protein is Type III pantothenate kinase of Thermus thermophilus (strain ATCC BAA-163 / DSM 7039 / HB27).